The following is a 131-amino-acid chain: Fluoride-specific ion channel FluC 1 (131 aa).

4 helical membrane passes run 4-24 (ILLI…LSGW), 32-52 (FPLG…LVMY), 66-86 (ILLT…SYES), and 95-115 (LMQL…AVYL). Residues G74 and T77 each contribute to the Na(+) site.

It belongs to the fluoride channel Fluc/FEX (TC 1.A.43) family.

The protein resides in the cell membrane. The catalysed reaction is fluoride(in) = fluoride(out). Its activity is regulated as follows. Na(+) is not transported, but it plays an essential structural role and its presence is essential for fluoride channel function. Functionally, fluoride-specific ion channel. Important for reducing fluoride concentration in the cell, thus reducing its toxicity. This is Fluoride-specific ion channel FluC 1 from Methanosarcina acetivorans (strain ATCC 35395 / DSM 2834 / JCM 12185 / C2A).